A 486-amino-acid chain; its full sequence is MAINPLKILFVASEVEGLVKTGGLADVARALPLYLAQKGHDVRIMLPFYKTIKRRDEAKLLVSRWLPTHPGLPDIGYRIYQMDLEGVCVYLLDCPQYFDRPQLYAENNQAYPDNGERFAFLAAAALHASEQLAFAPDIVHCNDWHTGLLPLLLKTRHAHNPFFQHTRSVISIHNAAFQGVFERQQFWAVPEIADYEQRISYDYGHVNLLKCGVLYADKINAVSPNYASELLTHLGAHGMASIFQQRAADLRGILNGCDYQDWDPAFDDFLPATYDVDNLAGKHICKQSLQQETGLPVVDLPIYGMVCRLTEQKGVHLLLPVLDKFLHHKVQVVIVGSGDPSLAAQLQTLAQQFPDRLAFINTYDDRLAHLVEAGADFFLMPSLFEPCGLNQMYSLAYGTLPLVRAVGGLKDTVVDWDADPEQATGFCFNDPTANILLDAMRRSLLYYLQDPEQFARVQRNAMNTRFNWPDSVTQYEQMYQDALARH.

K20 lines the ADP-alpha-D-glucose pocket.

The protein belongs to the glycosyltransferase 1 family. Bacterial/plant glycogen synthase subfamily.

It carries out the reaction [(1-&gt;4)-alpha-D-glucosyl](n) + ADP-alpha-D-glucose = [(1-&gt;4)-alpha-D-glucosyl](n+1) + ADP + H(+). It participates in glycan biosynthesis; glycogen biosynthesis. Synthesizes alpha-1,4-glucan chains using ADP-glucose. The sequence is that of Glycogen synthase from Aeromonas hydrophila subsp. hydrophila (strain ATCC 7966 / DSM 30187 / BCRC 13018 / CCUG 14551 / JCM 1027 / KCTC 2358 / NCIMB 9240 / NCTC 8049).